Consider the following 348-residue polypeptide: Ferredoxin--NADP reductase 1 (348 aa).

Residues aspartate 33, lysine 41, tyrosine 45, valine 85, leucine 120, aspartate 287, and serine 328 each contribute to the FAD site.

It belongs to the ferredoxin--NADP reductase type 2 family. As to quaternary structure, homodimer. It depends on FAD as a cofactor.

The catalysed reaction is 2 reduced [2Fe-2S]-[ferredoxin] + NADP(+) + H(+) = 2 oxidized [2Fe-2S]-[ferredoxin] + NADPH. This Oceanobacillus iheyensis (strain DSM 14371 / CIP 107618 / JCM 11309 / KCTC 3954 / HTE831) protein is Ferredoxin--NADP reductase 1.